Consider the following 413-residue polypeptide: Histidine--tRNA ligase (413 aa).

This sequence belongs to the class-II aminoacyl-tRNA synthetase family.

The protein localises to the cytoplasm. It carries out the reaction tRNA(His) + L-histidine + ATP = L-histidyl-tRNA(His) + AMP + diphosphate + H(+). This Methanosarcina acetivorans (strain ATCC 35395 / DSM 2834 / JCM 12185 / C2A) protein is Histidine--tRNA ligase.